The following is a 513-amino-acid chain: Carboxyethyl-arginine beta-lactam-synthase (513 aa).

Asp253 and Asp351 together coordinate Mg(2+).

This sequence belongs to the asparagine synthetase family. In terms of assembly, homodimer. The cofactor is Mg(2+).

The catalysed reaction is N(2)-(2-carboxyethyl)-L-arginine + ATP = deoxyamidinoproclavaminate + AMP + diphosphate + H(+). It functions in the pathway antibiotic biosynthesis; clavulanate biosynthesis; clavulanate from D-glyceraldehyde 3-phosphate and L-arginine: step 2/8. The protein is Carboxyethyl-arginine beta-lactam-synthase (bls) of Streptomyces clavuligerus.